We begin with the raw amino-acid sequence, 652 residues long: Adhesion G protein-coupled receptor E3 (652 aa).

A signal peptide spans methionine 1 to threonine 21. At glutamine 22 to threonine 357 the chain is on the extracellular side. The EGF-like 1 domain occupies threonine 24–asparagine 66. Disulfide bonds link cysteine 28–cysteine 37, cysteine 31–cysteine 43, cysteine 45–cysteine 65, cysteine 71–cysteine 85, cysteine 79–cysteine 94, and cysteine 96–cysteine 117. Asparagine 34 and asparagine 39 each carry an N-linked (GlcNAc...) asparagine glycan. The 52-residue stretch at aspartate 67–glutamine 118 folds into the EGF-like 2; calcium-binding domain. 7 N-linked (GlcNAc...) asparagine glycosylation sites follow: asparagine 145, asparagine 189, asparagine 202, asparagine 250, asparagine 279, asparagine 327, and asparagine 334. In terms of domain architecture, GAIN-B spans lysine 183–glutamate 351. Intrachain disulfides connect cysteine 304–cysteine 333 and cysteine 321–cysteine 335. The GPS stretch occupies residues cysteine 304–glutamate 351. Residues valine 358 to phenylalanine 378 traverse the membrane as a helical segment. At leucine 379–threonine 389 the chain is on the cytoplasmic side. Residues serine 390–isoleucine 410 traverse the membrane as a helical segment. Over aspartate 411–lysine 416 the chain is Extracellular. The helical transmembrane segment at valine 417–methionine 437 threads the bilayer. At leucine 438–lysine 464 the chain is on the cytoplasmic side. Residues tryptophan 465–serine 485 form a helical membrane-spanning segment. The Extracellular segment spans residues tryptophan 486–phenylalanine 508. Residues leucine 509–isoleucine 529 form a helical membrane-spanning segment. Residues leucine 530–glutamine 557 lie on the Cytoplasmic side of the membrane. The chain crosses the membrane as a helical span at residues leucine 558–valine 578. Topologically, residues methionine 579–alanine 580 are extracellular. A helical transmembrane segment spans residues tyrosine 581–leucine 601. The Cytoplasmic segment spans residues serine 602–tyrosine 652. The tract at residues serine 621–tyrosine 652 is disordered.

Belongs to the G-protein coupled receptor 2 family. Adhesion G-protein coupled receptor (ADGR) subfamily. Forms a heterodimer, consisting of a large extracellular region (alpha subunit) non-covalently linked to a seven-transmembrane moiety (beta subunit). Post-translationally, proteolytically cleaved into 2 subunits, an extracellular alpha subunit and a seven-transmembrane subunit. Displays a predominantly leukocyte-restricted expression, with highest levels in neutrophils, monocytes and macrophages.

The protein resides in the cell membrane. Its subcellular location is the secreted. Orphan receptor that may play a role myeloid-myeloid interactions during immune and inflammatory responses. A ligand for the soluble form of this receptor is present at the surface of monocytes-derived macrophages and activated neutrophils. In Homo sapiens (Human), this protein is Adhesion G protein-coupled receptor E3.